A 193-amino-acid polypeptide reads, in one-letter code: Orotate phosphoribosyltransferase (193 aa).

Position 114–122 (114–122 (EDVITTGGS)) interacts with 5-phospho-alpha-D-ribose 1-diphosphate. 2 residues coordinate orotate: threonine 118 and arginine 146.

The protein belongs to the purine/pyrimidine phosphoribosyltransferase family. PyrE subfamily. In terms of assembly, homodimer. The cofactor is Mg(2+).

It catalyses the reaction orotidine 5'-phosphate + diphosphate = orotate + 5-phospho-alpha-D-ribose 1-diphosphate. The protein operates within pyrimidine metabolism; UMP biosynthesis via de novo pathway; UMP from orotate: step 1/2. In terms of biological role, catalyzes the transfer of a ribosyl phosphate group from 5-phosphoribose 1-diphosphate to orotate, leading to the formation of orotidine monophosphate (OMP). In Chlorobium phaeobacteroides (strain BS1), this protein is Orotate phosphoribosyltransferase.